Consider the following 349-residue polypeptide: Protein RecA (349 aa).

65–72 serves as a coordination point for ATP; the sequence is GPESSGKT.

It belongs to the RecA family.

The protein resides in the cytoplasm. Functionally, can catalyze the hydrolysis of ATP in the presence of single-stranded DNA, the ATP-dependent uptake of single-stranded DNA by duplex DNA, and the ATP-dependent hybridization of homologous single-stranded DNAs. It interacts with LexA causing its activation and leading to its autocatalytic cleavage. The chain is Protein RecA from Azotobacter vinelandii (strain DJ / ATCC BAA-1303).